The following is a 427-amino-acid chain: Light-independent protochlorophyllide reductase subunit N (427 aa).

[4Fe-4S] cluster-binding residues include Cys28, Cys53, and Cys114.

Belongs to the BchN/ChlN family. In terms of assembly, protochlorophyllide reductase is composed of three subunits; BchL, BchN and BchB. Forms a heterotetramer of two BchB and two BchN subunits. Requires [4Fe-4S] cluster as cofactor.

It carries out the reaction chlorophyllide a + oxidized 2[4Fe-4S]-[ferredoxin] + 2 ADP + 2 phosphate = protochlorophyllide a + reduced 2[4Fe-4S]-[ferredoxin] + 2 ATP + 2 H2O. The protein operates within porphyrin-containing compound metabolism; bacteriochlorophyll biosynthesis (light-independent). Its function is as follows. Component of the dark-operative protochlorophyllide reductase (DPOR) that uses Mg-ATP and reduced ferredoxin to reduce ring D of protochlorophyllide (Pchlide) to form chlorophyllide a (Chlide). This reaction is light-independent. The NB-protein (BchN-BchB) is the catalytic component of the complex. The polypeptide is Light-independent protochlorophyllide reductase subunit N (Dinoroseobacter shibae (strain DSM 16493 / NCIMB 14021 / DFL 12)).